The chain runs to 239 residues: Transcriptional activatory protein AadR (239 aa).

27-149 lines the a nucleoside 3',5'-cyclic phosphate pocket; the sequence is ICGELGPADH…FATRELSLAQ (123 aa). Positions 158-231 constitute an HTH crp-type domain; the sequence is RSAEEKVAAF…PDGVRVLDPK (74 aa). The H-T-H motif DNA-binding region spans 191 to 210; it reads RQDIADFLGLTIETVSRTFT.

Its function is as follows. Transcriptional activator of anaerobic gene expression. For aromatic acid degradation. Also required for the anaerobic degradation of benzoate. In Rhodopseudomonas palustris (strain ATCC BAA-98 / CGA009), this protein is Transcriptional activatory protein AadR (aadR).